The primary structure comprises 517 residues: Fatty acyl-CoA reductase wat (517 aa).

A run of 2 helical transmembrane segments spans residues Ile-378 to Ile-398 and Val-492 to Leu-512.

Belongs to the fatty acyl-CoA reductase family.

The protein resides in the apical cell membrane. The enzyme catalyses a long-chain fatty acyl-CoA + 2 NADPH + 2 H(+) = a long-chain primary fatty alcohol + 2 NADP(+) + CoA. Catalyzes the reduction of saturated fatty acyl-CoA to fatty alcohols. The preferred substrates are C24:0 and C26:0. Necessary for the final stages of tracheal maturation, to facilitate the transition from water-filled to gas-filled tubes. May help to maintain the integrity of the outer hydrophobic envelope of the trachea. This Drosophila melanogaster (Fruit fly) protein is Fatty acyl-CoA reductase wat.